The primary structure comprises 222 residues: Germin-like protein subfamily 1 member 13 (222 aa).

An N-terminal signal peptide occupies residues 1–18; the sequence is MRVSKSLILITLSALVIS. Cys32 and Cys49 are joined by a disulfide. The 152-residue stretch at 63 to 214 folds into the Cupin type-1 domain; sequence SGLNQAGSTN…AFQLDVNIVE (152 aa). Asn78 carries N-linked (GlcNAc...) asparagine glycosylation. His111, His113, Glu118, and His160 together coordinate Mn(2+).

This sequence belongs to the germin family. As to quaternary structure, oligomer (believed to be a pentamer but probably hexamer).

It localises to the secreted. The protein localises to the extracellular space. The protein resides in the apoplast. In terms of biological role, may play a role in plant defense. Probably has no oxalate oxidase activity even if the active site is conserved. This chain is Germin-like protein subfamily 1 member 13 (GLP6), found in Arabidopsis thaliana (Mouse-ear cress).